The following is a 95-amino-acid chain: UPF0235 protein AnaeK_1146 (95 aa).

The protein belongs to the UPF0235 family.

The polypeptide is UPF0235 protein AnaeK_1146 (Anaeromyxobacter sp. (strain K)).